Consider the following 165-residue polypeptide: Putative pre-16S rRNA nuclease (165 aa).

The protein belongs to the YqgF nuclease family.

The protein localises to the cytoplasm. In terms of biological role, could be a nuclease involved in processing of the 5'-end of pre-16S rRNA. The protein is Putative pre-16S rRNA nuclease of Sinorhizobium medicae (strain WSM419) (Ensifer medicae).